Reading from the N-terminus, the 728-residue chain is Polyribonucleotide nucleotidyltransferase (728 aa).

The Mg(2+) site is built by D489 and D495. One can recognise a KH domain in the interval 556–615 (PKIDTIKIDVDKIKIVIGKGGETIDKIIAETGVKIDIDEEGNVSIYSSDQDAINRAKEII). In terms of domain architecture, S1 motif spans 625–693 (DEVYHAKVVR…AKGRVDASMK (69 aa)). The interval 691–728 (SMKALLPRPPKPEKSDKHHDKGHPHKKHEEAPLTQTEE) is disordered. The segment covering 700 to 709 (PKPEKSDKHH) has biased composition (basic and acidic residues).

It belongs to the polyribonucleotide nucleotidyltransferase family. It depends on Mg(2+) as a cofactor.

It localises to the cytoplasm. The catalysed reaction is RNA(n+1) + phosphate = RNA(n) + a ribonucleoside 5'-diphosphate. Involved in mRNA degradation. Catalyzes the phosphorolysis of single-stranded polyribonucleotides processively in the 3'- to 5'-direction. This Streptococcus gordonii (strain Challis / ATCC 35105 / BCRC 15272 / CH1 / DL1 / V288) protein is Polyribonucleotide nucleotidyltransferase.